The following is a 265-amino-acid chain: Glutamate racemase (265 aa).

Substrate-binding positions include 7 to 8 (DS) and 39 to 40 (YG). The active-site Proton donor/acceptor is the C70. Position 71–72 (71–72 (NT)) interacts with substrate. The Proton donor/acceptor role is filled by C179. 180 to 181 (TH) lines the substrate pocket.

The protein belongs to the aspartate/glutamate racemases family.

It catalyses the reaction L-glutamate = D-glutamate. The protein operates within cell wall biogenesis; peptidoglycan biosynthesis. Functionally, provides the (R)-glutamate required for cell wall biosynthesis. This Gloeobacter violaceus (strain ATCC 29082 / PCC 7421) protein is Glutamate racemase.